A 195-amino-acid polypeptide reads, in one-letter code: ATP-dependent Clp protease proteolytic subunit (195 aa).

Residue S102 is the Nucleophile of the active site. Residue H125 is part of the active site.

This sequence belongs to the peptidase S14 family. In terms of assembly, component of the chloroplastic Clp protease core complex.

The protein localises to the plastid. It is found in the chloroplast stroma. The enzyme catalyses Hydrolysis of proteins to small peptides in the presence of ATP and magnesium. alpha-casein is the usual test substrate. In the absence of ATP, only oligopeptides shorter than five residues are hydrolyzed (such as succinyl-Leu-Tyr-|-NHMec, and Leu-Tyr-Leu-|-Tyr-Trp, in which cleavage of the -Tyr-|-Leu- and -Tyr-|-Trp bonds also occurs).. Functionally, cleaves peptides in various proteins in a process that requires ATP hydrolysis. Has a chymotrypsin-like activity. Plays a major role in the degradation of misfolded proteins. This Phaseolus vulgaris (Kidney bean) protein is ATP-dependent Clp protease proteolytic subunit.